A 423-amino-acid polypeptide reads, in one-letter code: Acyl-coenzyme A diphosphatase FITM2 (423 aa).

Positions 1–47 are disordered; sequence MATKRRPLRPNLGGTAGSPSSSGSNMNFRPGGPDITRSEARGTRPTA. At 1–75 the chain is on the cytoplasmic side; sequence MATKRRPLRP…KTIFFNTDLK (75 aa). Residues 76–96 traverse the membrane as a helical segment; that stretch reads VALYLGSLFVISVIGDFVPFP. The Lumenal portion of the chain corresponds to 97–113; that stretch reads KTYFARSDNLFNQYFVK. A helical membrane pass occupies residues 114 to 134; sequence IGWGWTLLFVVPFLVLSAYTI. The Cytoplasmic segment spans residues 135-146; it reads TCGDHKRMLRHH. The chain crosses the membrane as a helical span at residues 147 to 167; sequence FPRIVIATFFWFFWTKLFNVV. Topologically, residues 168 to 191 are lumenal; that stretch reads ENSYGRCTTKGYATKSSCLKAGHL. The helical transmembrane segment at 192 to 212 threads the bilayer; that stretch reads WKGFDISGHAFILIHSSLVLI. His200 is a catalytic residue. Residues 213-270 are Cytoplasmic-facing; that stretch reads EEARPIIRWETIKEHIRNERHNRSTAENSGTNPLRTLNEEQMRSLQFLYKRLTPIIRT. Residues 271-291 form a helical membrane-spanning segment; the sequence is LFIGMAALQLLWDIMLVGTML. Topologically, residues 292–299 are lumenal; it reads YYHRMIEK. His294 is an active-site residue. Residues 300 to 320 form a helical membrane-spanning segment; it reads VISGIIAILTWYFTYRFWYPT. At 321 to 423 the chain is on the cytoplasmic side; sequence PGLLPEAPGN…RDREQQTLES (103 aa). Disordered regions lie at residues 344–381 and 400–423; these read FKRPSHLSTGAATTSSGSNSSRTNLNGKAATTGVPRDQ and AAANLLMSDQQKRERDREQQTLES. The segment covering 351–367 has biased composition (low complexity); that stretch reads STGAATTSSGSNSSRTN. Basic and acidic residues predominate over residues 409-423; the sequence is QQKRERDREQQTLES.

This sequence belongs to the FIT family. FIT2 subfamily.

It localises to the endoplasmic reticulum membrane. It carries out the reaction an acyl-CoA + H2O = an acyl-4'-phosphopantetheine + adenosine 3',5'-bisphosphate + 2 H(+). Its function is as follows. Fatty acyl-coenzyme A (CoA) diphosphatase that hydrolyzes fatty acyl-CoA to yield acyl-4'-phosphopantetheine and adenosine 3',5'-bisphosphate. Preferentially hydrolyzes unsaturated long-chain acyl-CoA substrates in the endoplasmic reticulum (ER) lumen. This catalytic activity is required for maintaining ER structure and for lipid droplets (LDs) biogenesis, which are lipid storage organelles involved in maintaining lipid and energy homeostasis. May directly bind to diacylglycerol (DAGs) and triacylglycerol, which is also important for LD biogenesis. May support directional budding of nacent LDs from the ER into the cytosol by reducing DAG levels at sites of LD formation. Plays a role in the regulation of cell morphology and cytoskeletal organization. Required for correct morphology of nociceptive multi-dendritic sensory neurons. Required for normal mechanical amplification in hearing. The protein is Acyl-coenzyme A diphosphatase FITM2 of Drosophila melanogaster (Fruit fly).